Consider the following 1977-residue polypeptide: MAARSAPSCHLRLEWVYGYRGHQCRNNLYYTAAKEIVYFVAGVGVVYSPREHRQKFFRGHSDDIISLALHPERVLVATGQVGKEPYICVWDSYTVQTVSVLKDVHTHGIACLAFDLDGQRLVSVGLDSKNAVCVWDWKRGRMLSMAPGHTDRIFDISWDLYQPNKLVSCGVKHIKFWSLCGNALTPKRGVFGKTGDLQTILCLACARDELTYSGALNGDIYVWKGINLIRTIQGAHTAGIFSMNSCEEGFATGGRDGCIRLWDLTFKPITVIDLRETEQGYKGLSVRSVCWRGDHILVGTQDSEIFEIVVHERNKPFLIMQGHCEGELWALAVHPTKPLAVTGSDDRSVRIWSLVDHALIARCNMEEPIRCAAVNVDGIHLALGMKDGSFTVLRVRDMTEVVHIKDRKEAIHELKYSPDGAYLAVGCNDSSVDIYGVAQRYKKVGECVGSLSFITHLDWSSDSRYLQTNDGSGKRLLYKMPGGKEVTSKEEIKGMHWASWTCVAGLEVNGIWPKYSDINDINSVDGNYVGQVLVTADDYGVVKLFRYPCLRKGAKFRKYIGHSAHVTNVRWSHDYQWVISIGGADHSVFQWKFIPERKLKDALHIAPQESLAESNSDESDSDLSDVPELDSEIEQETQLTYHRQVYKEDLPQLKEQCKEKQKSATSKRRERTPGTSIRLHFIHGYRGYDCRSNLFYTQIGEIVYHVAAVGVIYNRQQNTQRFYLGHDDDILCLAIHPLKDYVATGQVGRDPSIHVWDTETIKPLSILKGYHQYGICAVDFSADGKRLASVGIDDSHTIVLWDWKKGEKLSVTRGSKDKIFVVKMNPYVPDKLITAGIKHMKFWRRAGGGLIGKKGYVGTLGKNDTMMCAVYGWTEEMAFSGTSTGDVCIWRDVFLVKTVKAHDGPVFSMHALEKGFVTGGKDGMVALWDDSFERCLKTYAIKRADLAPGSKGLLLEDNPSIRAISLGHGHILVGTKNGEILEVDKSGPITLLVQGHMEGEVWGLATHPYLPICATVSDDKTLRIWDLSPSHCMLAVRKLKKGGRCCCFSPDGKALAVGLNDGSFLMANADTLEDLVSFHHRKDIISDIRFSPGSGKYLAVASHDSFVDIYNVTSSKRVGVCKGATSYITHIDWDSRGKLLQVNTGAKEQLFFEAPRGKRQTIPSVEVEKISWATWTSVLGLCCEGIWPVIGEVTEVTASCLTSDKMVLATGDDLGFVKLFRYPAKGKFGKFKKYVAHSTHVTNVRWTYDDSMLVTLGGADMSLMVWTNEVESHREKKYCDSEESDIDSEEDGGYDSDVTRENEISYTIRALSTNIRPMFGVKPHLQQKEPSVDERQGVVRGSRPPVSRAPPQPEKLQSNNVGKKKRPIEDLVLELAFGYRGRDCRNNVHYLNDGDDIIYHTASIGILHNVATGTQSFYQEHNDDILCLTVNQHPKFINIVATGQVGDSADMSATAPSVHIWDAVNKQTLSILRCSHSKGVCSVSFSATGKLLLSVGLDPEHTVTIWRWQEGAKIASRGGHNQRIFVAEFRPDSDTQFVSVGIKHVKFWTLAGRALLSKKGLLSSLEDARMQTMLAVAFGANNLTFTGTISGDVCVWKDHILCRVVARAHNGPVFAMYTTLRDGLIVTGGKERPSKEGGAVKLWDQELRRCRAFRLETGQVTDCVRSVCRGKGKILVGTRNSEIIEVGEKNAACNILVNGHVDGPIWGLATHPSRDFFLSAAEDGTVRLWDIADKKMLNKVNLGHAARTVCYSPEGDMVAIGMKNGEFIILLVSSLKIWGKKRDRRCAIHDIRFSPDSRYLAVGSSENSVDFYDLTLGPTLNRISYCKDIPSFVIQMDFSADSRHLQVSSGCYKRHVYEVPSGKHLVDHAAIDRITWATWTSILGDEVMGIWSRHAEKADVTCACVSHSGISLVTGDDFGMVKLYDFPCPEKFAKHKRFLGHSPHVTNIRFTSGDRHVVSAGGDDCSLFVWKCVHMPH.

WD repeat units follow at residues 59–100, 104–145, 148–187, 195–233, 235–273, 280–321, 323–362, 406–445, 449–488, and 561–601; these read GHSD…TVSV, VHTH…MLSM, GHTDRIFDISWDLYQPNKLVSCGVKHIKFWSLCGNALTPK, GDLQTILCLACARDELTYSGALNGDIYVWKGINLIRTIQ, AHTAGIFSMNSCEEGFATGGRDGCIRLWDLTFKPITVID, GYKG…LIMQ, HCEGELWALAVHPTKPLAVTGSDDRSVRIWSLVDHALIAR, DRKEAIHELKYSPDGAYLAVGCNDSSVDIYGVAQRYKKVG, GSLSFITHLDWSSDSRYLQTNDGSGKRLLYKMPGGKEVTS, and GHSA…KLKD. Positions 609-629 are disordered; it reads ESLAESNSDESDSDLSDVPEL. Over residues 615-629 the composition is skewed to acidic residues; the sequence is NSDESDSDLSDVPEL. WD repeat units lie at residues 725–766, 770–811, 814–853, 861–900, 901–940, 996–1035, 1038–1077, 1080–1120, and 1236–1276; these read GHDD…PLSI, YHQY…KLSV, GSKDKIFVVKMNPYVPDKLITAGIKHMKFWRRAGGGLIGK, GKNDTMMCAVYGWTEEMAFSGTSTGDVCIWRDVFLVKTVK, AHDGPVFSMHALEKGFVTGGKDGMVALWDDSFERCLKTYA, HMEGEVWGLATHPYLPICATVSDDKTLRIWDLSPSHCMLA, KLKKGGRCCCFSPDGKALAVGLNDGSFLMANADTLEDLVS, HRKD…RVGV, and AHST…HREK. 2 disordered regions span residues 1276 to 1297 and 1323 to 1363; these read KKYCDSEESDIDSEEDGGYDSD and PHLQ…NVGK. Over residues 1281 to 1294 the composition is skewed to acidic residues; sequence SEESDIDSEEDGGY. The segment covering 1326–1337 has biased composition (basic and acidic residues); the sequence is QQKEPSVDERQG. WD repeat units follow at residues 1420 to 1471, 1475 to 1516, 1519 to 1558, 1568 to 1606, 1608 to 1654, 1699 to 1739, 1741 to 1782, 1783 to 1822, 1895 to 1934, and 1940 to 1977; these read EHND…TLSI, SHSK…KIAS, GHNQRIFVAEFRPDSDTQFVSVGIKHVKFWTLAGRALLSK, ARMQTMLAVAFGANNLTFTGTISGDVCVWKDHILCRVVA, AHNG…RAFR, GHVD…MLNK, NLGH…GKKR, DRRCAIHDIRFSPDSRYLAVGSSENSVDFYDLTLGPTLNR, AEKADVTCACVSHSGISLVTGDDFGMVKLYDFPCPEKFAK, and GHSPHVTNIRFTSGDRHVVSAGGDDCSLFVWKCVHMPH.

The protein belongs to the WD repeat EMAP family.

The protein resides in the cytoplasm. It is found in the cytoskeleton. In terms of biological role, may modify the assembly dynamics of microtubules, such that microtubules are slightly longer, but more dynamic. In Mus musculus (Mouse), this protein is Echinoderm microtubule-associated protein-like 5 (Eml5).